The sequence spans 695 residues: Elongation factor G 2 (695 aa).

In terms of domain architecture, tr-type G spans 5–280; it reads SKYRNIGIFA…AVVDYLPSPT (276 aa). GTP-binding positions include 14 to 21, 78 to 82, and 132 to 135; these read AHVDAGKT, DTPGH, and NKLD.

The protein belongs to the TRAFAC class translation factor GTPase superfamily. Classic translation factor GTPase family. EF-G/EF-2 subfamily.

Its subcellular location is the cytoplasm. Functionally, catalyzes the GTP-dependent ribosomal translocation step during translation elongation. During this step, the ribosome changes from the pre-translocational (PRE) to the post-translocational (POST) state as the newly formed A-site-bound peptidyl-tRNA and P-site-bound deacylated tRNA move to the P and E sites, respectively. Catalyzes the coordinated movement of the two tRNA molecules, the mRNA and conformational changes in the ribosome. The chain is Elongation factor G 2 from Photobacterium profundum (strain SS9).